The primary structure comprises 209 residues: Ribonuclease HII (209 aa).

The RNase H type-2 domain occupies 20-209 (DSEIGIDEVG…KSFLNKLNLI (190 aa)). The a divalent metal cation site is built by Asp-26, Glu-27, and Asp-122.

Belongs to the RNase HII family. The cofactor is Mn(2+). Mg(2+) serves as cofactor.

It localises to the cytoplasm. The catalysed reaction is Endonucleolytic cleavage to 5'-phosphomonoester.. Its function is as follows. Endonuclease that specifically degrades the RNA of RNA-DNA hybrids. This chain is Ribonuclease HII, found in Prochlorococcus marinus subsp. pastoris (strain CCMP1986 / NIES-2087 / MED4).